The following is a 766-amino-acid chain: LPS-assembly protein LptD (766 aa).

Positions 1–18 are cleaved as a signal peptide; it reads MNIRYLLLLSLMPHLVWA.

It belongs to the LptD family. As to quaternary structure, component of the lipopolysaccharide transport and assembly complex. Interacts with LptE and LptA.

It is found in the cell outer membrane. Its function is as follows. Together with LptE, is involved in the assembly of lipopolysaccharide (LPS) at the surface of the outer membrane. In Shewanella denitrificans (strain OS217 / ATCC BAA-1090 / DSM 15013), this protein is LPS-assembly protein LptD.